The chain runs to 212 residues: Endoplasmic reticulum vesicle protein 25 (212 aa).

A signal peptide spans 1–21 (MKSFAACVLLLCALFFEQVFA). The Lumenal segment spans residues 22–181 (VRFDIPASTK…TNESTNRRVR (160 aa)). The GOLD domain occupies 34 to 122 (QVCIRDFVSE…SRSIELDIES (89 aa)). The chain crosses the membrane as a helical span at residues 182–202 (NFSIAVIVVLVALGAWQVNYM). At 203 to 212 (KNFFRAKHII) the chain is on the cytoplasmic side.

This sequence belongs to the EMP24/GP25L family.

The protein localises to the endoplasmic reticulum membrane. It localises to the golgi apparatus membrane. Constituent of COPII-coated endoplasmic reticulum-derived transport vesicles. Required for efficient transport of a subset of secretory proteins to the Golgi. Facilitates retrograde transport from the Golgi to the endoplasmic reticulum. In Kluyveromyces lactis (strain ATCC 8585 / CBS 2359 / DSM 70799 / NBRC 1267 / NRRL Y-1140 / WM37) (Yeast), this protein is Endoplasmic reticulum vesicle protein 25 (ERV25).